We begin with the raw amino-acid sequence, 84 residues long: Small ribosomal subunit protein bS18A (84 aa).

Belongs to the bacterial ribosomal protein bS18 family. In terms of assembly, part of the 30S ribosomal subunit. Forms a tight heterodimer with protein bS6.

Binds as a heterodimer with protein bS6 to the central domain of the 16S rRNA, where it helps stabilize the platform of the 30S subunit. The protein is Small ribosomal subunit protein bS18A of Mycobacterium marinum (strain ATCC BAA-535 / M).